Consider the following 33-residue polypeptide: Cysteine-rich venom protein tripurin (33 aa).

This sequence belongs to the CRISP family. In terms of processing, contains 8 disulfide bonds. In terms of tissue distribution, expressed by the venom gland.

Its subcellular location is the secreted. Functionally, blocks contraction of smooth muscle elicited by high potassium-induced depolarization, but does not block caffeine-stimulated contraction. May target voltage-gated calcium channels on smooth muscle. The chain is Cysteine-rich venom protein tripurin from Trimeresurus purpureomaculatus (Mangrove pit viper).